A 34-amino-acid chain; its full sequence is Photosystem I reaction center subunit XII (34 aa).

A helical membrane pass occupies residues 9–29 (LIILGLIVVMHAGVLALRLGI).

This sequence belongs to the PsaM family.

It localises to the cellular thylakoid membrane. In Prochlorococcus marinus subsp. pastoris (strain CCMP1986 / NIES-2087 / MED4), this protein is Photosystem I reaction center subunit XII.